A 251-amino-acid chain; its full sequence is Hydroxyacylglutathione hydrolase (251 aa).

Zn(2+) is bound by residues H53, H55, D57, H58, H110, D127, and H165.

The protein belongs to the metallo-beta-lactamase superfamily. Glyoxalase II family. In terms of assembly, monomer. Zn(2+) serves as cofactor.

The enzyme catalyses an S-(2-hydroxyacyl)glutathione + H2O = a 2-hydroxy carboxylate + glutathione + H(+). It participates in secondary metabolite metabolism; methylglyoxal degradation; (R)-lactate from methylglyoxal: step 2/2. Functionally, thiolesterase that catalyzes the hydrolysis of S-D-lactoyl-glutathione to form glutathione and D-lactic acid. The sequence is that of Hydroxyacylglutathione hydrolase from Cronobacter sakazakii (strain ATCC BAA-894) (Enterobacter sakazakii).